An 842-amino-acid chain; its full sequence is Elongation factor G, mitochondrial (842 aa).

The N-terminal 58 residues, 1 to 58 (MVAIPRVAAARSLARQLARQSLRTTSFASAPVRIAIASTPLARSPSSFRSLSSSTRRS), are a transit peptide targeting the mitochondrion. Residues 93–398 (VRQRNVGISA…GVCSYLPNPA (306 aa)) enclose the tr-type G domain. Residues 102 to 109 (AHIDSGKT), 196 to 200 (DTPGH), and 250 to 253 (NKMD) contribute to the GTP site. The disordered stretch occupies residues 423–442 (AGEDQEAAAEARKNAAPPVL).

It belongs to the TRAFAC class translation factor GTPase superfamily. Classic translation factor GTPase family. EF-G/EF-2 subfamily.

The protein localises to the mitochondrion. It functions in the pathway protein biosynthesis; polypeptide chain elongation. Mitochondrial GTPase that catalyzes the GTP-dependent ribosomal translocation step during translation elongation. During this step, the ribosome changes from the pre-translocational (PRE) to the post-translocational (POST) state as the newly formed A-site-bound peptidyl-tRNA and P-site-bound deacylated tRNA move to the P and E sites, respectively. Catalyzes the coordinated movement of the two tRNA molecules, the mRNA and conformational changes in the ribosome. The chain is Elongation factor G, mitochondrial from Mycosarcoma maydis (Corn smut fungus).